The sequence spans 309 residues: tRNA pseudouridine synthase B (309 aa).

Asp-39 serves as the catalytic Nucleophile.

It belongs to the pseudouridine synthase TruB family. Type 1 subfamily.

The catalysed reaction is uridine(55) in tRNA = pseudouridine(55) in tRNA. Responsible for synthesis of pseudouridine from uracil-55 in the psi GC loop of transfer RNAs. The protein is tRNA pseudouridine synthase B of Bacillus pumilus (strain SAFR-032).